The primary structure comprises 219 residues: Cytidylate kinase (219 aa).

ATP is bound at residue 10 to 18 (GPAAAGKST).

Belongs to the cytidylate kinase family. Type 1 subfamily.

The protein resides in the cytoplasm. It carries out the reaction CMP + ATP = CDP + ADP. The enzyme catalyses dCMP + ATP = dCDP + ADP. This chain is Cytidylate kinase, found in Staphylococcus saprophyticus subsp. saprophyticus (strain ATCC 15305 / DSM 20229 / NCIMB 8711 / NCTC 7292 / S-41).